The chain runs to 784 residues: MNNSVTSNGTHEFVCEAWLGSSSGGLLRGDDPLKYSTPLLLLLISLVSSLSSVFQALLRPLANVDFVTQILAGIFLGPSALGQNIDLVKKLFNTRSYFIIESFEAISFMFISYISTAQVDMGVIKRGGKLAIINGLSLFLFPYVVGAIACTVITSNIRGTVAKNNPEQLHNLLTNQSVVYFQVAYSVLSNLKMLNSEPGRLALSSIMVANCFGWGFFLLLITFDSFLHQNYSKTTYLPTFTKVLLLVGIVVVCRPIFNWIVKRTPEGKKLKASHLCTICVMLCTATFLSETVGFPYVVGSVALGLVTPKTPPFGTGLTDKIGSFCYAVLMPCYVIGIGNKVDFFSFNLRDIISLEFLIFTISAAKFASIVLPSLYFQVPISHAVIVGFIVCIQGIYDVQIFKQLLNYKNISHEAFGIMVISAMVHSTIFTAIVKNLYGWVQRKHITYRRQTVQHYEPNKPLKILTCFYHRETVPPILTVLELSTCPSSASSHSIVSVNLEELEQNNVPLLIQHHPGHNDESSTSSSRRDQISKAFEKFRSGHDLQENVSVECFTAVAPSKTMHEDVCALAFEKETDLIIFGMADGTAAERRLCRNVRNASPSSVAVLMDQGRLPDFKNMGTAMKNGSMRINICSIFLGGADDRETLAFAVRMTNQPYVNLTVLKLVDGENVSHLNDVVEKRLDFRTIEKFRQDTMNKHNVALREVWIKEASDLVNLLREEGNNYDLIMVGIRHEKSFEVLQGLSVWSEIEELGEIGDLLVSRDLKLSASVLAVQQQLSSVVEEV.

Helical transmembrane passes span 38-58 (PLLL…QALL), 61-81 (LANV…PSAL), 97-117 (YFII…ISTA), 130-150 (LAII…AIAC), 201-221 (LALS…LLLI), 240-260 (FTKV…FNWI), 286-306 (TFLS…LGLV), 321-341 (IGSF…GNKV), 351-371 (IISL…SIVL), 376-396 (FQVP…QGIY), and 413-433 (EAFG…TAIV).

This sequence belongs to the monovalent cation:proton antiporter 2 (CPA2) transporter (TC 2.A.37) family. CHX (TC 2.A.37.4) subfamily. In terms of tissue distribution, expressed in pollen.

The protein resides in the membrane. Functionally, may operate as a cation/H(+) antiporter. This Arabidopsis thaliana (Mouse-ear cress) protein is Cation/H(+) antiporter 26 (CHX26).